The sequence spans 313 residues: N-acetyl-gamma-glutamyl-phosphate reductase (313 aa).

Residue Cys117 is part of the active site.

This sequence belongs to the NAGSA dehydrogenase family. Type 2 subfamily.

It localises to the cytoplasm. The catalysed reaction is N-acetyl-L-glutamate 5-semialdehyde + phosphate + NADP(+) = N-acetyl-L-glutamyl 5-phosphate + NADPH + H(+). Its pathway is amino-acid biosynthesis; L-arginine biosynthesis; N(2)-acetyl-L-ornithine from L-glutamate: step 3/4. Functionally, catalyzes the NADPH-dependent reduction of N-acetyl-5-glutamyl phosphate to yield N-acetyl-L-glutamate 5-semialdehyde. This is N-acetyl-gamma-glutamyl-phosphate reductase from Burkholderia cenocepacia (strain HI2424).